The sequence spans 283 residues: MTAQVISGSALAKKVKTEVGQKIEQYVAQGKRAPGLAVILVGADPASQVYVGSKRKSCAEIGINSKSYDLEESTSEAALLTLIDELNNDADIDGILVQLPLPKHIDSTKVIERIAPHKDVDGFHPYNVGRLCQRIPTLRACTPYGIMKLLETTELNLKGRHAVIVGASNIVGRPMAMELLLAGCTVTVTHRFTTNLEGYVRQADILVVAVGKAEFIPGNWVKEGAVVIDVGINRCEDGKLRGDVEFAAAAEKAGFITPVPGGVGPMTVAMLMFNTLTAYENNG.

Residues 166-168 (GAS) and isoleucine 232 contribute to the NADP(+) site.

Belongs to the tetrahydrofolate dehydrogenase/cyclohydrolase family. In terms of assembly, homodimer.

It carries out the reaction (6R)-5,10-methylene-5,6,7,8-tetrahydrofolate + NADP(+) = (6R)-5,10-methenyltetrahydrofolate + NADPH. The enzyme catalyses (6R)-5,10-methenyltetrahydrofolate + H2O = (6R)-10-formyltetrahydrofolate + H(+). It functions in the pathway one-carbon metabolism; tetrahydrofolate interconversion. Catalyzes the oxidation of 5,10-methylenetetrahydrofolate to 5,10-methenyltetrahydrofolate and then the hydrolysis of 5,10-methenyltetrahydrofolate to 10-formyltetrahydrofolate. This is Bifunctional protein FolD from Mannheimia succiniciproducens (strain KCTC 0769BP / MBEL55E).